The following is a 615-amino-acid chain: Chaperone protein DnaK (615 aa).

A Phosphothreonine; by autocatalysis modification is found at threonine 174. A disordered region spans residues 581-615 (QAAPKDGAEGDAKSADDNTVDGDFEEVDPNKDDKK). Residues 586-596 (DGAEGDAKSAD) are compositionally biased toward basic and acidic residues. Residues 598–607 (NTVDGDFEEV) show a composition bias toward acidic residues.

The protein belongs to the heat shock protein 70 family.

Its function is as follows. Acts as a chaperone. This is Chaperone protein DnaK from Leuconostoc mesenteroides subsp. mesenteroides (strain ATCC 8293 / DSM 20343 / BCRC 11652 / CCM 1803 / JCM 6124 / NCDO 523 / NBRC 100496 / NCIMB 8023 / NCTC 12954 / NRRL B-1118 / 37Y).